The chain runs to 229 residues: Adenine nucleotide translocase lysine N-methyltransferase (229 aa).

The N-terminal sequence (NTS) stretch occupies residues 1–22 (MDQDDPAEALTELREKRLGLLE). Residues 20-42 (LLEIVQAAAGSGLAVYTIWALLL) form a helical membrane-spanning segment. The tract at residues 43–77 (QPGFRRVPLRLQVPYVGASARQVENVLSLLRGRPG) is methyltransferase (MTase). Residues 43 to 77 (QPGFRRVPLRLQVPYVGASARQVENVLSLLRGRPG) form a pre-methyltransferase (preMT) region.

This sequence belongs to the ANT/ATPSC lysine N-methyltransferase family.

The protein localises to the mitochondrion membrane. The enzyme catalyses L-lysyl-[protein] + 3 S-adenosyl-L-methionine = N(6),N(6),N(6)-trimethyl-L-lysyl-[protein] + 3 S-adenosyl-L-homocysteine + 3 H(+). Mitochondrial protein-lysine N-methyltransferase that trimethylates adenine nucleotide translocases ANT2/SLC25A5 and ANT3/SLC25A6, thereby regulating mitochondrial respiration. Probably also trimethylates ANT1/SLC25A4. This chain is Adenine nucleotide translocase lysine N-methyltransferase, found in Mus musculus (Mouse).